The primary structure comprises 238 residues: Phosphoribosylaminoimidazole-succinocarboxamide synthase (238 aa).

Belongs to the SAICAR synthetase family.

The catalysed reaction is 5-amino-1-(5-phospho-D-ribosyl)imidazole-4-carboxylate + L-aspartate + ATP = (2S)-2-[5-amino-1-(5-phospho-beta-D-ribosyl)imidazole-4-carboxamido]succinate + ADP + phosphate + 2 H(+). The protein operates within purine metabolism; IMP biosynthesis via de novo pathway; 5-amino-1-(5-phospho-D-ribosyl)imidazole-4-carboxamide from 5-amino-1-(5-phospho-D-ribosyl)imidazole-4-carboxylate: step 1/2. The sequence is that of Phosphoribosylaminoimidazole-succinocarboxamide synthase from Persephonella marina (strain DSM 14350 / EX-H1).